A 481-amino-acid chain; its full sequence is Neuronal acetylcholine receptor subunit eat-2 (481 aa).

The N-terminal stretch at 1-19 (MFLLLQILYILLFLNLADT) is a signal peptide. The Extracellular segment spans residues 20–235 (SDDEYRLLKD…MHLKRRTMYY (216 aa)). Residue Asn-93 is glycosylated (N-linked (GlcNAc...) asparagine). The cysteines at positions 147 and 161 are disulfide-linked. Transmembrane regions (helical) follow at residues 236 to 256 (GLNW…GFTM), 264 to 284 (VTLQ…VSEV), and 292 to 312 (IPII…SICV). Residues 313 to 443 (SLITVNIFYR…WRFMAMVIDR (131 aa)) are Cytoplasmic-facing. Positions 356 to 384 (KPKREKKKEEEEDEESNAGGKEEESELIS) are disordered. The helical transmembrane segment at 444-464 (ASLFLFTGLIFGTTFVIFAAC) threads the bilayer.

The protein belongs to the ligand-gated ion channel (TC 1.A.9) family. Acetylcholine receptor (TC 1.A.9.1) subfamily. Neuronal AChR seems to be composed of two different type of subunits: alpha and beta.

The protein localises to the postsynaptic cell membrane. The protein resides in the cell membrane. After binding acetylcholine, the AChR responds by an extensive change in conformation that affects all subunits and leads to opening of an ion-conducting channel across the plasma membrane. Nicotinic acetylcholine receptor in the MC pharyngeal motor neuron involved in pharyngeal pumping. Has a role in the determination of life span possibly via calorific restriction which affects growth rate, although this is independent of metabolic activity. The chain is Neuronal acetylcholine receptor subunit eat-2 from Caenorhabditis briggsae.